We begin with the raw amino-acid sequence, 20 residues long: Major extrapallial fluid protein (20 aa).

Residues 1–20 (NPVDDHHDDHHDAPIVEHHD) are disordered.

In terms of assembly, homodimer. In terms of processing, glycosylated.

Appears to be a building block of the soluble organic matrix of the shell. The protein binds calcium. This chain is Major extrapallial fluid protein, found in Mytilus edulis (Blue mussel).